The sequence spans 353 residues: MAATKRKRRGGLAVQAKKLKRDAKDGKLPAKANDVSEEAAEEEKDRIPGPVCKGKWKNKERILIFSSRGINFRTRHLMQDLRMLMPHSKADTKMDRKDKLFVINEVCEMKNCNKCIYFEAKKKQDLYMWLSNSPHGPSAKFLVQNIHTLAELKMTGNCLKGSRPLLSFDPAFDELPHYALLKELLIQIFSTPRYHPKSQPFVDHVFTFTILDNRIWFRNFQIIEEDAALVEIGPRFVLNLIKIFQGSFGGPTLYENPHYQSPNMHRRVIRSITAAKYREKQQVKDVQKLRKKEPKTILPHDPTADVFVTPAEEKPVEIQWVKPEPKVDLKARKKRIYKRQRKMKQKMSSGNAK.

Over residues 1 to 10 (MAATKRKRRG) the composition is skewed to basic residues. Positions 1 to 46 (MAATKRKRRGGLAVQAKKLKRDAKDGKLPAKANDVSEEAAEEEKDR) are disordered. Residues 60–249 (ERILIFSSRG…LIKIFQGSFG (190 aa)) enclose the Brix domain. Lys-160 participates in a covalent cross-link: Glycyl lysine isopeptide (Lys-Gly) (interchain with G-Cter in SUMO2). Position 261 is a phosphoserine (Ser-261). Lys-276 is subject to N6-acetyllysine. Residues Lys-314 and Lys-322 each participate in a glycyl lysine isopeptide (Lys-Gly) (interchain with G-Cter in SUMO2) cross-link.

The protein belongs to the BRX1 family.

It localises to the nucleus. The protein resides in the nucleolus. Functionally, required for biogenesis of the 60S ribosomal subunit. The chain is Ribosome biogenesis protein BRX1 homolog (BRIX1) from Bos taurus (Bovine).